A 424-amino-acid polypeptide reads, in one-letter code: Fasciclin-like arabinogalactan protein 1 (424 aa).

A signal peptide spans M1–A24. FAS1 domains are found at residues H25–L170 and E184–L323. N-linked (GlcNAc...) asparagine glycans are attached at residues N26, N128, N160, N186, and N240. The disordered stretch occupies residues A338–T393. The span at A355–A366 shows a compositional bias: basic residues. Residue D396 is the site of GPI-anchor amidated aspartate attachment. The propeptide at A397 to L424 is removed in mature form.

The protein belongs to the fasciclin-like AGP family. As to expression, preferentially expressed in flowers.

The protein localises to the secreted. It localises to the extracellular space. Its subcellular location is the apoplast. The protein resides in the cell membrane. In terms of biological role, may be a cell surface adhesion protein. The polypeptide is Fasciclin-like arabinogalactan protein 1 (FLA1) (Arabidopsis thaliana (Mouse-ear cress)).